The chain runs to 995 residues: S1 RNA-binding domain-containing protein 1 (995 aa).

Positions 23 to 81 (SFSELSSASEEDDKEDSAWEPQKKVPRSRKQPPPKESKPKRMPRVKKNAPQISDGSEVV) are disordered. Glycyl lysine isopeptide (Lys-Gly) (interchain with G-Cter in SUMO2) cross-links involve residues K84 and K134. A disordered region spans residues 120–165 (CAAQPHTVRRTKKLKVEEETSKASNLEGESNSSETPSTSTVWGGTC). The span at 146-159 (EGESNSSETPSTST) shows a compositional bias: low complexity. Glycyl lysine isopeptide (Lys-Gly) (interchain with G-Cter in SUMO2) cross-links involve residues K166, K167, and K183. K185 participates in a covalent cross-link: Glycyl lysine isopeptide (Lys-Gly) (interchain with G-Cter in SUMO1); alternate. K185 participates in a covalent cross-link: Glycyl lysine isopeptide (Lys-Gly) (interchain with G-Cter in SUMO2); alternate. Residues 258–288 (ADSLREVQQTLEELRAVAKKVHSTIQKIKKE) adopt a coiled-coil conformation. The residue at position 861 (S861) is a Phosphoserine. Residues 919-992 (GTVLTGKVEN…PRSRITLDLI (74 aa)) form the S1 motif domain. K955 is covalently cross-linked (Glycyl lysine isopeptide (Lys-Gly) (interchain with G-Cter in SUMO2)). S964 bears the Phosphoserine mark.

In Homo sapiens (Human), this protein is S1 RNA-binding domain-containing protein 1 (SRBD1).